The chain runs to 356 residues: Nicotinate-nucleotide--dimethylbenzimidazole phosphoribosyltransferase (356 aa).

The active-site Proton acceptor is Glu317.

This sequence belongs to the CobT family. Homodimer.

The catalysed reaction is 5,6-dimethylbenzimidazole + nicotinate beta-D-ribonucleotide = alpha-ribazole 5'-phosphate + nicotinate + H(+). The protein operates within nucleoside biosynthesis; alpha-ribazole biosynthesis; alpha-ribazole from 5,6-dimethylbenzimidazole: step 1/2. In terms of biological role, catalyzes the synthesis of alpha-ribazole-5'-phosphate from nicotinate mononucleotide (NAMN) and 5,6-dimethylbenzimidazole (DMB). The sequence is that of Nicotinate-nucleotide--dimethylbenzimidazole phosphoribosyltransferase from Salmonella schwarzengrund (strain CVM19633).